The chain runs to 418 residues: Thyroid hormone receptor alpha (418 aa).

Residues 1–41 form a disordered region; it reads MDQNLSGLDCLSEPDEKRWPDGKRKRKNSQCMGKSGMSGDS. The segment at 1–60 is modulating; sequence MDQNLSGLDCLSEPDEKRWPDGKRKRKNSQCMGKSGMSGDSSVSLLSAGYIPSYLTKDEP. The Zn(2+) site is built by C61, C64, C78, C81, C99, C105, C115, and C118. 2 consecutive NR C4-type zinc fingers follow at residues 61-81 and 99-123; these read CVVC…CEGC and CKYD…FKKC. Positions 61–135 form a DNA-binding region, nuclear receptor; that stretch reads CVVCSDKATG…VGMAMDLVLD (75 aa). Positions 171 to 415 constitute an NR LBD domain; sequence EEWELIRIVT…PPLFLEVFED (245 aa). R236 and S285 together coordinate 3,3',5-triiodo-L-thyronine.

This sequence belongs to the nuclear hormone receptor family. NR1 subfamily. Highest level of expression in erythrocytes. Also expressed in liver, tail, eye, muscle and skin.

The protein resides in the nucleus. Nuclear hormone receptor that can act as a repressor or activator of transcription. High affinity receptor for thyroid hormones, including triiodothyronine and thyroxine. The sequence is that of Thyroid hormone receptor alpha (thra) from Aquarana catesbeiana (American bullfrog).